We begin with the raw amino-acid sequence, 417 residues long: Serine hydroxymethyltransferase (417 aa).

(6S)-5,6,7,8-tetrahydrofolate contacts are provided by residues Leu121 and 125–127; that span reads GHL. Lys229 bears the N6-(pyridoxal phosphate)lysine mark. 355–357 is a (6S)-5,6,7,8-tetrahydrofolate binding site; the sequence is SPF.

Belongs to the SHMT family. In terms of assembly, homodimer. Pyridoxal 5'-phosphate is required as a cofactor.

Its subcellular location is the cytoplasm. The catalysed reaction is (6R)-5,10-methylene-5,6,7,8-tetrahydrofolate + glycine + H2O = (6S)-5,6,7,8-tetrahydrofolate + L-serine. It participates in one-carbon metabolism; tetrahydrofolate interconversion. Its pathway is amino-acid biosynthesis; glycine biosynthesis; glycine from L-serine: step 1/1. Catalyzes the reversible interconversion of serine and glycine with tetrahydrofolate (THF) serving as the one-carbon carrier. This reaction serves as the major source of one-carbon groups required for the biosynthesis of purines, thymidylate, methionine, and other important biomolecules. Also exhibits THF-independent aldolase activity toward beta-hydroxyamino acids, producing glycine and aldehydes, via a retro-aldol mechanism. The polypeptide is Serine hydroxymethyltransferase (Serratia proteamaculans (strain 568)).